Here is a 537-residue protein sequence, read N- to C-terminus: Chaperonin GroEL (537 aa).

ATP contacts are provided by residues 29 to 32 (TLGP), 86 to 90 (DGTTT), Gly413, and Asp492.

It belongs to the chaperonin (HSP60) family. Forms a cylinder of 14 subunits composed of two heptameric rings stacked back-to-back. Interacts with the co-chaperonin GroES.

It localises to the cytoplasm. It carries out the reaction ATP + H2O + a folded polypeptide = ADP + phosphate + an unfolded polypeptide.. Its function is as follows. Together with its co-chaperonin GroES, plays an essential role in assisting protein folding. The GroEL-GroES system forms a nano-cage that allows encapsulation of the non-native substrate proteins and provides a physical environment optimized to promote and accelerate protein folding. In Dehalococcoides mccartyi (strain CBDB1), this protein is Chaperonin GroEL.